Reading from the N-terminus, the 135-residue chain is MTLTLRVLAPDQSVFDDTADEIILPSTTGLLGVLPGHISMVTAIDFGVLRVLKNGNWDSIALTGGFAEVESNEVTVLVNKAEMGKNIDSGKAEAELEQAKNQLSQNKDQGNSSEKIKAQETLNKAKAWFQASKSD.

This sequence belongs to the ATPase epsilon chain family. As to quaternary structure, F-type ATPases have 2 components, CF(1) - the catalytic core - and CF(0) - the membrane proton channel. CF(1) has five subunits: alpha(3), beta(3), gamma(1), delta(1), epsilon(1). CF(0) has three main subunits: a, b and c.

The protein localises to the cellular thylakoid membrane. Its function is as follows. Produces ATP from ADP in the presence of a proton gradient across the membrane. This is ATP synthase epsilon chain from Prochlorococcus marinus (strain NATL1A).